A 124-amino-acid polypeptide reads, in one-letter code: uncharacterized protein (124 aa).

Positions 1-23 are cleaved as a signal peptide; the sequence is MHKLLKLLSITLIGLSVATGVQA.

Belongs to the cytochrome b562 family.

This is an uncharacterized protein from Pasteurella multocida (strain Pm70).